The chain runs to 527 residues: Serine/threonine-protein kinase NLK (527 aa).

Sufficient for interaction with DAPK3 regions lie at residues 1–125 and 124–416; these read MSLC…KAHH and HHHQ…SKRI. Required for interaction with TAB2 regions lie at residues 1–304 and 434–527; these read MSLC…VVTQ and YHTC…LVWE. Disordered stretches follow at residues 22–72 and 90–140; these read AAAA…SSAA and QQPY…DIEP. A compositionally biased stretch (basic residues) spans 26–54; the sequence is GHHHHHHHHLPHLPPPHLHHHHHPQHHLH. Residues 103–119 show a composition bias toward low complexity; that stretch reads PGPAAAAPAQVQAAAAA. Residues 122–131 show a composition bias toward basic residues; that stretch reads KAHHHQHSHH. In terms of domain architecture, Protein kinase spans 138 to 427; sequence IEPDRPIGYG…AKDALAHPYL (290 aa). Residues 144–152 and Lys-167 each bind ATP; that span reads IGYGAFGVV. Asp-264 (proton acceptor) is an active-site residue. Thr-298 is subject to Phosphothreonine; by autocatalysis. The TQE signature appears at 298–300; the sequence is TQE. The segment at 428–527 is required for homodimerization and kinase activation and localization to the nucleus; that stretch reads DEGRLRYHTC…EMPPSPLVWE (100 aa). Ser-522 bears the Phosphoserine mark.

Belongs to the protein kinase superfamily. CMGC Ser/Thr protein kinase family. MAP kinase subfamily. Homodimer. Homodimerization is required for intermolecular autophosphorylation, kinase activation and nuclear localization. May interact with components of cullin-RING-based SCF (SKP1-CUL1-F-box protein) E3 ubiquitin-protein ligase complexes. Interacts with LEF1, MEF2A, MYBL1 and MYBL2. Interacts with the upstream activating kinases HIPK2 and MAP3K7/TAK1. Interaction with MAP3K7/TAK1 seems to be indirect, and may be mediated by other proteins such as STAT3, TAB1 and TAB2. Interacts with and phosphorylates a number of transcription factors including FOXO1, FOXO3, FOXO4, MYB, NOTCH1 and TCF7L2/TCF4. Interacts with DAPK3/ZIPK, and this interaction may disrupt interaction with transcription factors such as TCF7L2/TCF4. Interacts with RNF138/NARF. Interacts with ATF5; the interaction stabilizes ATF5 at the protein level in a kinase-independent manner. Mg(2+) is required as a cofactor. Phosphorylated on Thr-298. Intermolecular autophosphorylation on Thr-298 activates the enzyme.

It localises to the nucleus. Its subcellular location is the cytoplasm. It carries out the reaction L-seryl-[protein] + ATP = O-phospho-L-seryl-[protein] + ADP + H(+). It catalyses the reaction L-threonyl-[protein] + ATP = O-phospho-L-threonyl-[protein] + ADP + H(+). Its activity is regulated as follows. Activated by dimerization and subsequent intermolecular autophosphorylation on Thr-298. Activated by the non-canonical Wnt signaling pathway, in which WNT5A treatment leads to activation of MAP3K7/TAK1 and HIPK2, which subsequently phosphorylates and activates this protein. Other cytokines such as IL6 may also activate this regulatory circuit. Serine/threonine-protein kinase that regulates a number of transcription factors with key roles in cell fate determination. Positive effector of the non-canonical Wnt signaling pathway, acting downstream of WNT5A, MAP3K7/TAK1 and HIPK2. Negative regulator of the canonical Wnt/beta-catenin signaling pathway. Binds to and phosphorylates TCF7L2/TCF4 and LEF1, promoting the dissociation of the TCF7L2/LEF1/beta-catenin complex from DNA, as well as the ubiquitination and subsequent proteolysis of LEF1. Together these effects inhibit the transcriptional activation of canonical Wnt/beta-catenin target genes. Negative regulator of the Notch signaling pathway. Binds to and phosphorylates NOTCH1, thereby preventing the formation of a transcriptionally active ternary complex of NOTCH1, RBPJ/RBPSUH and MAML1. Negative regulator of the MYB family of transcription factors. Phosphorylation of MYB leads to its subsequent proteolysis while phosphorylation of MYBL1 and MYBL2 inhibits their interaction with the coactivator CREBBP. Other transcription factors may also be inhibited by direct phosphorylation of CREBBP itself. Acts downstream of IL6 and MAP3K7/TAK1 to phosphorylate STAT3, which is in turn required for activation of NLK by MAP3K7/TAK1. Upon IL1B stimulus, cooperates with ATF5 to activate the transactivation activity of C/EBP subfamily members. Phosphorylates ATF5 but also stabilizes ATF5 protein levels in a kinase-independent manner. Acts as an inhibitor of the mTORC1 complex in response to osmotic stress by mediating phosphorylation of RPTOR, thereby preventing recruitment of the mTORC1 complex to lysosomes. The sequence is that of Serine/threonine-protein kinase NLK (NLK) from Homo sapiens (Human).